We begin with the raw amino-acid sequence, 346 residues long: Eukaryotic translation initiation factor 3 subunit I (346 aa).

WD repeat units follow at residues 8 to 49 (GHER…GTYH), 50 to 91 (GHQG…KTWD), 145 to 184 (CEDSKATVAGWSYLSKYIIAGHEDGSVSQFDGKNGDLLYN), 189 to 228 (ELNQPITDLQWSHDRTYFITASKDKTSKLITAKDLEVLKT), and 286 to 325 (GHFGPLNTVAADPTGKSYASGGEDGYVRIHHFDKGYFDFM).

This sequence belongs to the eIF-3 subunit I family. As to quaternary structure, component of the eukaryotic translation initiation factor 3 (eIF-3) complex.

It is found in the cytoplasm. Functionally, component of the eukaryotic translation initiation factor 3 (eIF-3) complex, which is involved in protein synthesis of a specialized repertoire of mRNAs and, together with other initiation factors, stimulates binding of mRNA and methionyl-tRNAi to the 40S ribosome. The eIF-3 complex specifically targets and initiates translation of a subset of mRNAs involved in cell proliferation. This Neurospora crassa (strain ATCC 24698 / 74-OR23-1A / CBS 708.71 / DSM 1257 / FGSC 987) protein is Eukaryotic translation initiation factor 3 subunit I (tif-34).